Here is a 419-residue protein sequence, read N- to C-terminus: L-rhamnose isomerase (419 aa).

Residues His262, Asp294, and Asp296 each contribute to the Mn(2+) site.

Belongs to the rhamnose isomerase family. As to quaternary structure, homotetramer. Requires Mn(2+) as cofactor.

Its subcellular location is the cytoplasm. The enzyme catalyses L-rhamnopyranose = L-rhamnulose. It functions in the pathway carbohydrate degradation; L-rhamnose degradation; glycerone phosphate from L-rhamnose: step 1/3. Its function is as follows. Catalyzes the interconversion of L-rhamnose and L-rhamnulose. In Citrobacter koseri (strain ATCC BAA-895 / CDC 4225-83 / SGSC4696), this protein is L-rhamnose isomerase.